The primary structure comprises 191 residues: Large ribosomal subunit protein uL6 (191 aa).

This sequence belongs to the universal ribosomal protein uL6 family. As to quaternary structure, part of the 50S ribosomal subunit.

Functionally, this protein binds to the 23S rRNA, and is important in its secondary structure. It is located near the subunit interface in the base of the L7/L12 stalk, and near the tRNA binding site of the peptidyltransferase center. The chain is Large ribosomal subunit protein uL6 from Gloeobacter violaceus (strain ATCC 29082 / PCC 7421).